The chain runs to 216 residues: Somatotropin (216 aa).

The N-terminal stretch at 1–26 (MAADPQSSVLLAFALLCLPWPQEVGA) is a signal peptide. Position 45 (H45) interacts with Zn(2+). Cysteines 78 and 189 form a disulfide. At S131 the chain carries Phosphoserine. Residue E198 participates in Zn(2+) binding. Residues C206 and C214 are joined by a disulfide bond.

It belongs to the somatotropin/prolactin family.

It is found in the secreted. In terms of biological role, plays an important role in growth control. Its major role in stimulating body growth is to stimulate the liver and other tissues to secrete IGF1. It stimulates both the differentiation and proliferation of myoblasts. It also stimulates amino acid uptake and protein synthesis in muscle and other tissues. The chain is Somatotropin (GH1) from Ailuropoda melanoleuca (Giant panda).